The chain runs to 45 residues: uncharacterized protein (45 aa).

It belongs to the asfivirus C62L family.

This is an uncharacterized protein from Ornithodoros (relapsing fever ticks).